We begin with the raw amino-acid sequence, 405 residues long: MSLVEISGSDAMAAPMPGRVPPPPPRPPPMPRRLPPMFDAFDHTGAGMVWGFPRPAKKRASLKPLHWVKITSDLQGSLWDELQRRHGDSQTAIELDISELETLFFVEAKPEKIRLHDLRRASYRVFNVINLSMPLPDMMTAVLAMDESVVDVDQIEKLIKFCPTNEEMELLKTYTGDKAALGKYEQYLLELMKVPRLEAKLRVFSFKTQFGTKITELKERLNVVTSACEENLLLIHQVRSSEKLKEIMKKIPCLGNTSNQGPDRGKTFLSPVEFKLDRLSVKRMHYFCKLKEIMKKIPCLGNTSKSNPRVGVKLDSSVSDTHTVKSMHYYCKVLASEASELLDVYKDLQSLESASKIQVKSLAQNIQAIIKRLEKLKQELTASETDGPASEVFCNVCWFFVRLMI.

The tract at residues 1–31 is disordered; sequence MSLVEISGSDAMAAPMPGRVPPPPPRPPPMP. The span at 18–31 shows a compositional bias: pro residues; sequence GRVPPPPPRPPPMP. The region spanning 52-405 is the FH2 domain; the sequence is FPRPAKKRAS…VCWFFVRLMI (354 aa).

Belongs to the formin-like family. Class-II subfamily.

This chain is Formin-like protein 15a (FH15A), found in Arabidopsis thaliana (Mouse-ear cress).